A 5405-amino-acid polypeptide reads, in one-letter code: IgGFc-binding protein (5405 aa).

Positions 1–23 are cleaved as a signal peptide; that stretch reads MGALWSWWILWAGATLLWGLTQE. An igGFc-binding region spans residues 24 to 450; it reads ASVDLKNTGR…EPSCEGMQCA (427 aa). N75 and N91 each carry an N-linked (GlcNAc...) asparagine glycan. A VWFD 1 domain is found at 470–650; it reads AVCRAQGDPH…KLDDGDYLCE (181 aa). Cystine bridges form between C472–C611 and C494–C649. Residues 745-799 form the TIL 1 domain; the sequence is CPANSRYELCGPACPTSCNGAAAPSNCSGRPCVEGCVCLPGFVASGGACVPASSC. In terms of domain architecture, VWFD 2 spans 862-1041; sequence GTCQGSGDPH…WQEETRPGCG (180 aa). Intrachain disulfides connect C864–C1003 and C886–C1040. Positions 1136 to 1189 constitute a TIL 2 domain; the sequence is CPPHSHYEACSYGCPLSCGDLPVPGGCGSECHEGCVCDEGFALSGESCLPLASC. The VWFD 3 domain occupies 1250–1429; sequence STCQASGDPH…EEVVPDSPCL (180 aa). 2 disulfide bridges follow: C1252–C1390 and C1274–C1428. N-linked (GlcNAc...) (complex) asparagine glycosylation occurs at N1317. One can recognise a TIL 3 domain in the interval 1532–1585; it reads CPPNSHYELCADTCSLGCSALSAPPQCQDGCAEGCQCDSGFLYNGQACVPIQQC. A VWFD 4 domain is found at 1671-1854; that stretch reads ATCWLWGDPH…RAPGWDPLCW (184 aa). 3 disulfide bridges follow: C1673/C1815, C1695/C1853, and C1704/C1812. Residue N1743 is glycosylated (N-linked (GlcNAc...) asparagine). A TIL 4 domain is found at 1950-2007; sequence CPENSHYEVCGSPCPASCPSPAPLTTPAVCEGPCVEGCQCDAGFVLSADRCVPLNNGC. A VWFD 5 domain is found at 2070-2253; the sequence is AECQAWGDPH…VSKPCPSPCT (184 aa). Intrachain disulfides connect C2072–C2211 and C2094–C2252. N2138 carries N-linked (GlcNAc...) asparagine glycosylation. Positions 2337–2390 constitute a TIL 5 domain; that stretch reads CPAHSHYELCGDSCPGSCPSLSAPEGCESACREGCVCDAGFVLSGDTCVPVGQC. The VWFD 6 domain maps to 2451–2630; sequence TTCQASGDPH…EEVVPDSPCL (180 aa). 2 disulfide bridges follow: C2453–C2591 and C2475–C2629. Residue N2518 is glycosylated (N-linked (GlcNAc...) asparagine). Residues 2733–2786 form the TIL 6 domain; it reads CPQNSHYELCADTCSLGCSALSAPLQCPDGCAEGCQCDSGFLYNGQACVPIQQC. The VWFD 7 domain maps to 2872 to 3055; it reads ATCWLWGDPH…RAPGWDPLCW (184 aa). 3 disulfide bridges follow: C2874-C3016, C2896-C3054, and C2905-C3013. The TIL 7 domain occupies 3151–3208; the sequence is CPENSHYEVCGPPCPASCPSPAPLTTPAVCEGPCVEGCQCDAGFVLSADRCVPLNNGC. The 184-residue stretch at 3271 to 3454 folds into the VWFD 8 domain; that stretch reads AECQAWGDPH…VSKPCPSPCT (184 aa). 2 disulfide bridges follow: C3273/C3412 and C3295/C3453. One can recognise a TIL 8 domain in the interval 3538–3591; sequence CPAHSHYELCGDSCPGSCPSLSAPEGCESACREGCVCDAGFVLSGDTCVPVGQC. Residues 3652–3831 form the VWFD 9 domain; it reads TTCQASGDPH…EEVVPDSPCL (180 aa). 2 cysteine pairs are disulfide-bonded: C3654-C3792 and C3676-C3830. N3719 carries an N-linked (GlcNAc...) asparagine glycan. In terms of domain architecture, TIL 9 spans 3934–3987; it reads CPQNSHYELCADTCSLGCSALSAPLQCPDGCAEGCQCDSGFLYNGQACVPIQQC. One can recognise a VWFD 10 domain in the interval 4073–4256; it reads ATCWLWGDPH…RAPGWDPLCW (184 aa). Intrachain disulfides connect C4075–C4217, C4097–C4255, and C4106–C4214. N4145 carries an N-linked (GlcNAc...) asparagine glycan. The 58-residue stretch at 4352-4409 folds into the TIL 10 domain; that stretch reads CPENSHYEVCGPPCPASCPSPAPLTTPAVCEGPCVEGCQCDAGFVLSADRCVPLNNGC. Residues 4472–4655 enclose the VWFD 11 domain; sequence AECQAWGDPH…VSKPCPSPCT (184 aa). Intrachain disulfides connect C4474–C4613 and C4496–C4654. Residue N4540 is glycosylated (N-linked (GlcNAc...) asparagine). A TIL 11 domain is found at 4739–4792; sequence CPAHSHYELCGDSCPVSCPSLSAPEGCESACREGCVCDAGFVLSGDTCVPVGQC. The region spanning 4854-5025 is the VWFD 12 domain; the sequence is GRCLANGGIH…RAPGSSKGCG (172 aa). 2 disulfides stabilise this stretch: C4856-C4986 and C4878-C5024. The 54-residue stretch at 5121–5174 folds into the TIL 12 domain; the sequence is CPAHSHYSICTRTCQGSCAALSGLTGCTTRCFEGCECDDRFLLSQGVCIPVQDC. A VWFD 13 domain is found at 5233 to 5404; the sequence is GLCVLSVGAN…WRAQDFSPCY (172 aa). Residues C5235 and C5372 are joined by a disulfide bond.

As to quaternary structure, interacts with the Fc portion of IgG and with MUC2. In terms of tissue distribution, mainly expressed in placenta and colon epithelium. Expressed in thyroid, and down-regulated in thyroid carcinomas. Present in serum, with higher levels in patients with various autoimmune diseases (at protein level).

The protein resides in the secreted. In terms of biological role, may be involved in the maintenance of the mucosal structure as a gel-like component of the mucosa. This is IgGFc-binding protein (FCGBP) from Homo sapiens (Human).